The chain runs to 574 residues: Splicing factor U2af large subunit A (574 aa).

Positions 1 to 180 (MAEHEEQPYE…SKRVSGFDQG (180 aa)) are disordered. Low complexity predominate over residues 18–41 (PAPASAYAEYPAPEGSPPAAAAKP). The span at 53 to 143 (RSQHETQPHD…ERRRDRDRDG (91 aa)) shows a compositional bias: basic and acidic residues. Positions 144 to 172 (HRRHRSRSRSPSKGRDRRSRSRSRSRSSK) are enriched in basic residues. 3 RRM domains span residues 238-321 (RRVY…RPTD), 358-436 (DRIF…RANQ), and 479-565 (QVVS…YPED).

Belongs to the splicing factor SR family.

It is found in the nucleus. Functionally, necessary for the splicing of pre-mRNA. This chain is Splicing factor U2af large subunit A (U2AF65A), found in Oryza sativa subsp. japonica (Rice).